A 159-amino-acid polypeptide reads, in one-letter code: Transcription elongation factor GreA (159 aa).

Residues A47 to A73 adopt a coiled-coil conformation.

The protein belongs to the GreA/GreB family.

In terms of biological role, necessary for efficient RNA polymerase transcription elongation past template-encoded arresting sites. The arresting sites in DNA have the property of trapping a certain fraction of elongating RNA polymerases that pass through, resulting in locked ternary complexes. Cleavage of the nascent transcript by cleavage factors such as GreA or GreB allows the resumption of elongation from the new 3'terminus. GreA releases sequences of 2 to 3 nucleotides. In Chlorobium phaeobacteroides (strain DSM 266 / SMG 266 / 2430), this protein is Transcription elongation factor GreA.